The sequence spans 368 residues: tRNA-specific 2-thiouridylase MnmA (368 aa).

Residues 11–18 (GMSGGVDS) and Met-37 contribute to the ATP site. Residues 97–99 (NPD) are interaction with target base in tRNA. Cys-102 functions as the Nucleophile in the catalytic mechanism. A disulfide bridge connects residues Cys-102 and Cys-199. Gly-127 lines the ATP pocket. The interval 149-151 (KDQ) is interaction with tRNA. Catalysis depends on Cys-199, which acts as the Cysteine persulfide intermediate. Residues 311 to 312 (RY) form an interaction with tRNA region.

The protein belongs to the MnmA/TRMU family. Interacts with TusE.

The protein localises to the cytoplasm. It catalyses the reaction S-sulfanyl-L-cysteinyl-[protein] + uridine(34) in tRNA + AH2 + ATP = 2-thiouridine(34) in tRNA + L-cysteinyl-[protein] + A + AMP + diphosphate + H(+). Functionally, catalyzes the 2-thiolation of uridine at the wobble position (U34) of tRNA(Lys), tRNA(Glu) and tRNA(Gln), leading to the formation of s(2)U34, the first step of tRNA-mnm(5)s(2)U34 synthesis. Sulfur is provided by IscS, via a sulfur-relay system. Binds ATP and its substrate tRNAs. This is tRNA-specific 2-thiouridylase MnmA from Shigella dysenteriae serotype 1 (strain Sd197).